The primary structure comprises 92 residues: Pyrimidine/purine nucleoside phosphorylase (92 aa).

Belongs to the nucleoside phosphorylase PpnP family.

It catalyses the reaction a purine D-ribonucleoside + phosphate = a purine nucleobase + alpha-D-ribose 1-phosphate. It carries out the reaction adenosine + phosphate = alpha-D-ribose 1-phosphate + adenine. The catalysed reaction is cytidine + phosphate = cytosine + alpha-D-ribose 1-phosphate. The enzyme catalyses guanosine + phosphate = alpha-D-ribose 1-phosphate + guanine. It catalyses the reaction inosine + phosphate = alpha-D-ribose 1-phosphate + hypoxanthine. It carries out the reaction thymidine + phosphate = 2-deoxy-alpha-D-ribose 1-phosphate + thymine. The catalysed reaction is uridine + phosphate = alpha-D-ribose 1-phosphate + uracil. The enzyme catalyses xanthosine + phosphate = alpha-D-ribose 1-phosphate + xanthine. Functionally, catalyzes the phosphorolysis of diverse nucleosides, yielding D-ribose 1-phosphate and the respective free bases. Can use uridine, adenosine, guanosine, cytidine, thymidine, inosine and xanthosine as substrates. Also catalyzes the reverse reactions. The protein is Pyrimidine/purine nucleoside phosphorylase of Rhodopirellula baltica (strain DSM 10527 / NCIMB 13988 / SH1).